Consider the following 171-residue polypeptide: N5-carboxyaminoimidazole ribonucleotide mutase (171 aa).

Ser-13, Asp-16, and Arg-43 together coordinate substrate.

The protein belongs to the AIR carboxylase family. Class I subfamily.

It catalyses the reaction 5-carboxyamino-1-(5-phospho-D-ribosyl)imidazole + H(+) = 5-amino-1-(5-phospho-D-ribosyl)imidazole-4-carboxylate. It functions in the pathway purine metabolism; IMP biosynthesis via de novo pathway; 5-amino-1-(5-phospho-D-ribosyl)imidazole-4-carboxylate from 5-amino-1-(5-phospho-D-ribosyl)imidazole (N5-CAIR route): step 2/2. Functionally, catalyzes the conversion of N5-carboxyaminoimidazole ribonucleotide (N5-CAIR) to 4-carboxy-5-aminoimidazole ribonucleotide (CAIR). This is N5-carboxyaminoimidazole ribonucleotide mutase from Mycobacterium leprae (strain TN).